The chain runs to 432 residues: MVRLLASEVQQLLHNKFVVVLGDSVHRAVYKDLVLLLQKDCLLTNKQLRTKGELSFEKDQLMMGGELDTLHNRTDYREVREFCSDHHLVRFYFLTRVYSEYMESVLKELQSGNHAPDVIIMNSCLWDVSRYGRNSLSSYRQNLENLFGRMDEVLPKSCLLVWNTAMPLGDKIKAAFLPQKCKGQYPRISVATLKKKVTQANFYSHAEATKHYFDVLDLNFHFRQARKHLQGDGVHWNEHAHRKLSYLLLAHMADAWGVELPHRDPWEPGFEAWESSGQVEERQPQDNIGPQFAQSPPYPFPRPPPLLPSPGLPIRPPPLLGCPLPPPQPMPPLPLYPQVSYFSSDPVFQSDEFYIHSDSPSSNHTGYAFEGDFSFYPQPPMPNFRPPCHQRQAPVVHRGFPRHFPRGPYMPWRERPRRPQKHAPACLESRPQ.

2 disordered regions span residues 273-312 (WESS…SPGL) and 407-432 (GPYM…SRPQ). The segment covering 285-294 (QDNIGPQFAQ) has biased composition (polar residues). The span at 296-312 (PPYPFPRPPPLLPSPGL) shows a compositional bias: pro residues.

This sequence belongs to the PC-esterase family.

This is PC-esterase domain-containing protein 1B (Pced1b) from Rattus norvegicus (Rat).